The sequence spans 221 residues: Deoxyribose-phosphate aldolase 1 (221 aa).

The active-site Proton donor/acceptor is Asp-89. Lys-152 (schiff-base intermediate with acetaldehyde) is an active-site residue. Lys-181 (proton donor/acceptor) is an active-site residue.

The protein belongs to the DeoC/FbaB aldolase family. DeoC type 1 subfamily.

The protein resides in the cytoplasm. It catalyses the reaction 2-deoxy-D-ribose 5-phosphate = D-glyceraldehyde 3-phosphate + acetaldehyde. Its pathway is carbohydrate degradation; 2-deoxy-D-ribose 1-phosphate degradation; D-glyceraldehyde 3-phosphate and acetaldehyde from 2-deoxy-alpha-D-ribose 1-phosphate: step 2/2. Catalyzes a reversible aldol reaction between acetaldehyde and D-glyceraldehyde 3-phosphate to generate 2-deoxy-D-ribose 5-phosphate. This Oceanobacillus iheyensis (strain DSM 14371 / CIP 107618 / JCM 11309 / KCTC 3954 / HTE831) protein is Deoxyribose-phosphate aldolase 1.